Here is a 471-residue protein sequence, read N- to C-terminus: Ribulose bisphosphate carboxylase large chain 2 (471 aa).

Residues N116 and T166 each coordinate substrate. K168 acts as the Proton acceptor in catalysis. K170 contacts substrate. K194, D196, and E197 together coordinate Mg(2+). K194 carries the N6-carboxylysine modification. Catalysis depends on H287, which acts as the Proton acceptor. Residues R288, H320, and S372 each coordinate substrate.

The protein belongs to the RuBisCO large chain family. Type I subfamily. As to quaternary structure, heterohexadecamer of 8 large chains and 8 small chains. Requires Mg(2+) as cofactor.

It localises to the carboxysome. The catalysed reaction is 2 (2R)-3-phosphoglycerate + 2 H(+) = D-ribulose 1,5-bisphosphate + CO2 + H2O. It catalyses the reaction D-ribulose 1,5-bisphosphate + O2 = 2-phosphoglycolate + (2R)-3-phosphoglycerate + 2 H(+). In terms of biological role, ruBisCO catalyzes two reactions: the carboxylation of D-ribulose 1,5-bisphosphate, the primary event in carbon dioxide fixation, as well as the oxidative fragmentation of the pentose substrate. Both reactions occur simultaneously and in competition at the same active site. This chain is Ribulose bisphosphate carboxylase large chain 2, found in Hydrogenovibrio marinus.